The sequence spans 510 residues: Beta-glucosidase 34 (510 aa).

A signal peptide spans 1–26; sequence MGNGGRCMVEVVILLVLMAMSQGCDA. Asn28 is a glycosylation site (N-linked (GlcNAc...) asparagine). Position 52 (Gln52) interacts with a beta-D-glucoside. Asn120 carries an N-linked (GlcNAc...) asparagine glycan. A beta-D-glucoside contacts are provided by residues His153 and 198–199; that span reads NE. Residue Glu199 is the Proton donor of the active site. Cys218 and Cys226 are disulfide-bonded. N-linked (GlcNAc...) asparagine glycans are attached at residues Asn279 and Asn331. A beta-D-glucoside is bound at residue Tyr342. N-linked (GlcNAc...) asparagine glycosylation occurs at Asn360. Residues Glu415, Trp465, 472 to 473, and Phe481 contribute to the a beta-D-glucoside site; that span reads EW. Catalysis depends on Glu415, which acts as the Nucleophile.

This sequence belongs to the glycosyl hydrolase 1 family.

It catalyses the reaction Hydrolysis of terminal, non-reducing beta-D-glucosyl residues with release of beta-D-glucose.. The protein is Beta-glucosidase 34 (BGLU34) of Oryza sativa subsp. japonica (Rice).